Here is a 160-residue protein sequence, read N- to C-terminus: Large ribosomal subunit protein eL21A (160 aa).

The tract at residues 114-138 (AKRKEAKAQGKTVQLRRQPAPPAKA) is disordered.

This sequence belongs to the eukaryotic ribosomal protein eL21 family. As to quaternary structure, component of the large ribosomal subunit (LSU). Mature yeast ribosomes consist of a small (40S) and a large (60S) subunit. The 40S small subunit contains 1 molecule of ribosomal RNA (18S rRNA) and at least 33 different proteins. The large 60S subunit contains 3 rRNA molecules (25S, 5.8S and 5S rRNA) and at least 46 different proteins.

Its subcellular location is the cytoplasm. Functionally, component of the ribosome, a large ribonucleoprotein complex responsible for the synthesis of proteins in the cell. The small ribosomal subunit (SSU) binds messenger RNAs (mRNAs) and translates the encoded message by selecting cognate aminoacyl-transfer RNA (tRNA) molecules. The large subunit (LSU) contains the ribosomal catalytic site termed the peptidyl transferase center (PTC), which catalyzes the formation of peptide bonds, thereby polymerizing the amino acids delivered by tRNAs into a polypeptide chain. The nascent polypeptides leave the ribosome through a tunnel in the LSU and interact with protein factors that function in enzymatic processing, targeting, and the membrane insertion of nascent chains at the exit of the ribosomal tunnel. In Schizosaccharomyces pombe (strain 972 / ATCC 24843) (Fission yeast), this protein is Large ribosomal subunit protein eL21A (rpl2101).